The chain runs to 553 residues: Solute carrier family 22 member 12 (553 aa).

A helical membrane pass occupies residues 10-30 (VGGLGRFQLFQTVALVTPILW). The N-linked (GlcNAc...) asparagine glycan is linked to Asn-56. 11 helical membrane passes run 146–166 (PMAQSIFLAGILVGAAVCGHA), 182–202 (LVSVSGTAAAFMPTFPLYCLF), 204–224 (FLLASAVAGVMMNTASLLMEW), 232–252 (LVMTLNALGFSFGQVLTGSVA), 260–280 (MLQLAVSAPFFLFFVYSWWLP), 351–371 (IISMLCWFAFGFTFYGLALDL), 378–398 (IFLLQALIGIVDFPVKTGSLL), 412–432 (FLVLPGLCILSNILVPHGMGV), 435–455 (SALAVLGLGCLGGAFTCITIF), 466–486 (MTAVGLCQVAARGGAMLGPLV), and 495–515 (WMPLLVYGVVPVLSGLAALLL). Phosphoserine is present on Ser-534. Thr-542 bears the Phosphothreonine mark.

Belongs to the major facilitator (TC 2.A.1) superfamily. Organic cation transporter (TC 2.A.1.19) family. In terms of assembly, interacts with PDZK1. In terms of processing, N-glycosylated. In terms of tissue distribution, detected in kidney (at protein level). Detected in kidney cortex, in proximal tubules.

Its subcellular location is the apical cell membrane. The enzyme catalyses urate(out) + (S)-lactate(in) = urate(in) + (S)-lactate(out). It catalyses the reaction nicotinate(in) + urate(out) = nicotinate(out) + urate(in). The catalysed reaction is urate(out) + n chloride(in) = urate(in) + n chloride(out). It carries out the reaction orotate(out) + nicotinate(in) = orotate(in) + nicotinate(out). In terms of biological role, electroneutral antiporter that translocates urate across the apical membrane of proximal tubular cells in exchange for monovalent organic or inorganic anions. Involved in renal reabsorption of urate and helps maintaining blood levels of uric acid. Mediates urate uptake by an exchange with organic anions such as (S)-lactate and nicotinate, and inorganic anion Cl(-). Other inorganic anions such as Br(-), I(-) and NO3(-) may also act as counteranions that exchange for urate. Also mediates orotate tubular uptake coupled with nicotinate efflux and to a lesser extent with lactate efflux, therefore displaying a potential role in orotate renal reabsorption. Orotate transport is Cl(-)-dependent. This chain is Solute carrier family 22 member 12, found in Mus musculus (Mouse).